The chain runs to 180 residues: MTTIVSVRRNGQVVIGGDGQVSLGNTVMKGNARKVHRLYNGKVLAGFAGGTADAFTLLERFEAKLQAHQGNLERAAVALAKEWRTDRALRRLEALLAVADAQRSFIITGNGDVVQPENDLIAIGSGGAFAQSAARALLENTELSAEEIVKKALTIAGDICVFTNSFHTIEVLEYPTVTPV.

The active site involves Thr2. 3 residues coordinate Na(+): Gly157, Cys160, and Thr163.

This sequence belongs to the peptidase T1B family. HslV subfamily. A double ring-shaped homohexamer of HslV is capped on each side by a ring-shaped HslU homohexamer. The assembly of the HslU/HslV complex is dependent on binding of ATP.

The protein localises to the cytoplasm. It catalyses the reaction ATP-dependent cleavage of peptide bonds with broad specificity.. Allosterically activated by HslU binding. Its function is as follows. Protease subunit of a proteasome-like degradation complex believed to be a general protein degrading machinery. The protein is ATP-dependent protease subunit HslV of Tolumonas auensis (strain DSM 9187 / NBRC 110442 / TA 4).